The chain runs to 327 residues: Phenylalanine--tRNA ligase alpha subunit (327 aa).

Residue glutamate 252 participates in Mg(2+) binding.

It belongs to the class-II aminoacyl-tRNA synthetase family. Phe-tRNA synthetase alpha subunit type 1 subfamily. As to quaternary structure, tetramer of two alpha and two beta subunits. Requires Mg(2+) as cofactor.

The protein resides in the cytoplasm. It carries out the reaction tRNA(Phe) + L-phenylalanine + ATP = L-phenylalanyl-tRNA(Phe) + AMP + diphosphate + H(+). This is Phenylalanine--tRNA ligase alpha subunit from Vibrio parahaemolyticus serotype O3:K6 (strain RIMD 2210633).